The primary structure comprises 202 residues: Small ribosomal subunit protein uS4c (202 aa).

An S4 RNA-binding domain is found at M90 to K158.

This sequence belongs to the universal ribosomal protein uS4 family. In terms of assembly, part of the 30S ribosomal subunit. Contacts protein S5. The interaction surface between S4 and S5 is involved in control of translational fidelity.

Its subcellular location is the plastid. It localises to the chloroplast. Functionally, one of the primary rRNA binding proteins, it binds directly to 16S rRNA where it nucleates assembly of the body of the 30S subunit. Its function is as follows. With S5 and S12 plays an important role in translational accuracy. This chain is Small ribosomal subunit protein uS4c (rps4), found in Marchantia romanica (Liverwort).